Consider the following 349-residue polypeptide: Probable dual-specificity RNA methyltransferase RlmN (349 aa).

Glutamate 94 serves as the catalytic Proton acceptor. Positions 100 to 334 (TETRTTACVS…VKVRRSRGKD (235 aa)) constitute a Radical SAM core domain. Residues cysteine 107 and cysteine 339 are joined by a disulfide bond. Residues cysteine 114, cysteine 118, and cysteine 121 each coordinate [4Fe-4S] cluster. S-adenosyl-L-methionine contacts are provided by residues 165 to 166 (GE), serine 197, 220 to 222 (SLH), and asparagine 296. Cysteine 339 functions as the S-methylcysteine intermediate in the catalytic mechanism.

This sequence belongs to the radical SAM superfamily. RlmN family. Requires [4Fe-4S] cluster as cofactor.

The protein resides in the cytoplasm. The enzyme catalyses adenosine(2503) in 23S rRNA + 2 reduced [2Fe-2S]-[ferredoxin] + 2 S-adenosyl-L-methionine = 2-methyladenosine(2503) in 23S rRNA + 5'-deoxyadenosine + L-methionine + 2 oxidized [2Fe-2S]-[ferredoxin] + S-adenosyl-L-homocysteine. It carries out the reaction adenosine(37) in tRNA + 2 reduced [2Fe-2S]-[ferredoxin] + 2 S-adenosyl-L-methionine = 2-methyladenosine(37) in tRNA + 5'-deoxyadenosine + L-methionine + 2 oxidized [2Fe-2S]-[ferredoxin] + S-adenosyl-L-homocysteine. Its function is as follows. Specifically methylates position 2 of adenine 2503 in 23S rRNA and position 2 of adenine 37 in tRNAs. This is Probable dual-specificity RNA methyltransferase RlmN from Flavobacterium johnsoniae (strain ATCC 17061 / DSM 2064 / JCM 8514 / BCRC 14874 / CCUG 350202 / NBRC 14942 / NCIMB 11054 / UW101) (Cytophaga johnsonae).